The chain runs to 642 residues: Threonine--tRNA ligase (642 aa).

The region spanning 1–61 (MPVITLPDGS…DADATVAIIT (61 aa)) is the TGS domain. Residues 243 to 534 (DHRKIGKQLD…LTEEFAGFFP (292 aa)) are catalytic. Positions 334, 385, and 511 each coordinate Zn(2+).

Belongs to the class-II aminoacyl-tRNA synthetase family. Homodimer. Zn(2+) is required as a cofactor.

The protein localises to the cytoplasm. The catalysed reaction is tRNA(Thr) + L-threonine + ATP = L-threonyl-tRNA(Thr) + AMP + diphosphate + H(+). Functionally, catalyzes the attachment of threonine to tRNA(Thr) in a two-step reaction: L-threonine is first activated by ATP to form Thr-AMP and then transferred to the acceptor end of tRNA(Thr). Also edits incorrectly charged L-seryl-tRNA(Thr). The polypeptide is Threonine--tRNA ligase (Edwardsiella ictaluri (strain 93-146)).